We begin with the raw amino-acid sequence, 828 residues long: Periplasmic nitrate reductase (828 aa).

Residues 1–31 (MKLSRRSFMKANAVAAAAAAAGLSVPGVARA) constitute a signal peptide (tat-type signal). Positions 39-95 (IKWDKAPCRFCGTGCGVLVGTQQGRVVACQGDPDAPVNRGLNCIKGYFLPKIMYGKD) constitute a 4Fe-4S Mo/W bis-MGD-type domain. The [4Fe-4S] cluster site is built by Cys-46, Cys-49, Cys-53, and Cys-81. Mo-bis(molybdopterin guanine dinucleotide) contacts are provided by residues Lys-83, Gln-150, Asn-175, Cys-179, 212 to 219 (WGANMAEM), 243 to 247 (STYQH), 262 to 264 (QSD), Met-372, Gln-376, Asn-482, 508 to 509 (SD), Lys-531, Asp-558, and 718 to 727 (TGRVLEHWHT). Phe-794 is a binding site for substrate. The Mo-bis(molybdopterin guanine dinucleotide) site is built by Asn-802 and Lys-819.

This sequence belongs to the prokaryotic molybdopterin-containing oxidoreductase family. NasA/NapA/NarB subfamily. As to quaternary structure, component of the periplasmic nitrate reductase NapAB complex composed of NapA and NapB. [4Fe-4S] cluster serves as cofactor. The cofactor is Mo-bis(molybdopterin guanine dinucleotide). In terms of processing, predicted to be exported by the Tat system. The position of the signal peptide cleavage has not been experimentally proven.

It localises to the periplasm. The catalysed reaction is 2 Fe(II)-[cytochrome] + nitrate + 2 H(+) = 2 Fe(III)-[cytochrome] + nitrite + H2O. Functionally, catalytic subunit of the periplasmic nitrate reductase complex NapAB. Receives electrons from NapB and catalyzes the reduction of nitrate to nitrite. The sequence is that of Periplasmic nitrate reductase from Shigella flexneri.